Reading from the N-terminus, the 272-residue chain is Acetylglutamate kinase (272 aa).

Residues 46–47 (GA), Arg-68, and Asn-166 contribute to the substrate site.

This sequence belongs to the acetylglutamate kinase family. ArgB subfamily.

The protein localises to the cytoplasm. It carries out the reaction N-acetyl-L-glutamate + ATP = N-acetyl-L-glutamyl 5-phosphate + ADP. Its pathway is amino-acid biosynthesis; L-arginine biosynthesis; N(2)-acetyl-L-ornithine from L-glutamate: step 2/4. In terms of biological role, catalyzes the ATP-dependent phosphorylation of N-acetyl-L-glutamate. The sequence is that of Acetylglutamate kinase from Dehalococcoides mccartyi (strain ATCC BAA-2266 / KCTC 15142 / 195) (Dehalococcoides ethenogenes (strain 195)).